The primary structure comprises 287 residues: Survival motor neuron protein (287 aa).

Residues 1-27 (MGGGGGLPEPEDSVLFRRGTGQSDDSD) are disordered. The tract at residues 8 to 39 (PEPEDSVLFRRGTGQSDDSDIWDDTALIKAYD) is P1 (binding site for GEMIN2). Thr-20 carries the phosphothreonine modification. Ser-23 and Ser-26 each carry phosphoserine. Residue Lys-46 forms a Glycyl lysine isopeptide (Lys-Gly) (interchain with G-Cter in SUMO2) linkage. A disordered region spans residues 52 to 83 (GDISEASDKPKSTPKRKPAKKNKSQKKNATTA). The span at 63-77 (STPKRKPAKKNKSQK) shows a compositional bias: basic residues. Thr-64 is subject to Phosphothreonine. The Tudor domain maps to 86–146 (QWKVGDKCSA…LSPACEVANN (61 aa)). The segment at 92-205 (KCSAVWSEDG…MSGSGLGPGK (114 aa)) is required for interaction with RPP20/POP7. Residues 148–216 (EQDTQENENE…GVKFSGPPPP (69 aa)) form a disordered region. The span at 157 to 180 (ESQISTDESENSSRSPGNKPNNIK) shows a compositional bias: polar residues. Residue Lys-205 forms a Glycyl lysine isopeptide (Lys-Gly) (interchain with G-Cter in SUMO2) linkage. The P2 (binding site for SM B) stretch occupies residues 234-261 (PPIIPPPPPICPDSLDDADALGSMLISW). The interval 273 to 287 (GFKQNQKEGRCSHFN) is required for interaction with SYNCRIP.

Belongs to the SMN family. Homooligomer; may form higher order homooligomers in the dimer to octamer range. Part of the core SMN complex that contains SMN1, GEMIN2/SIP1, DDX20/GEMIN3, GEMIN4, GEMIN5, GEMIN6, GEMIN7, GEMIN8 and STRAP/UNRIP. Part of the SMN-Sm complex that contains SMN1, GEMIN2/SIP1, DDX20/GEMIN3, GEMIN4, GEMIN5, GEMIN6, GEMIN7, GEMIN8, STRAP/UNRIP and the Sm proteins SNRPB, SNRPD1, SNRPD2, SNRPD3, SNRPE, SNRPF and SNRPG. Component of an import snRNP complex composed of KPNB1, RNUT1, SMN1 and ZNF259. Interacts with DDX20, FBL, NOLA1, RNUT1, SYNCRIP and with several spliceosomal snRNP core Sm proteins, including SNRPB, SNRPD1, SNRPD2, SNRPD3, SNRPE and ILF3. Interacts with GEMIN2; the interaction is direct. Interacts with GEMIN3; the interaction is direct. Interacts with GEMIN8; the interaction is direct. Interacts with SNRPB; the interaction is direct. Interacts (via Tudor domain) with SNRPD1 (via C-terminus); the interaction is direct. Interacts with SNRPD2; the interaction is direct. Interacts (via Tudor domain) with SNRPD3 (via C-terminus); the interaction is direct. Interacts with SNRPE; the interaction is direct. Interacts with OSTF1, LSM10, LSM11 and RPP20/POP7. Interacts (via C-terminal region) with ZPR1 (via C-terminal region). Interacts (via Tudor domain) with COIL. Interacts with SETX; recruits SETX to POLR2A. Interacts with POLR2A (via the C-terminal domain (CTD)). Interacts with PRMT5. Interacts with XRN2. Interacts (via C-terminus) with FMR1 (via C-terminus); the interaction is direct and occurs in a RNA-independent manner. Interacts (via Tudor domain) with SF3B2 ('Arg-508'-methylated form). Interacts with WRAP53/TCAB1. Interacts (via Tudor domain) with ELAVL4 in an RNA-independent manner; the interaction is required for localization of ELAVL4 to RNA granules. Interacts with FRG1.

The protein localises to the nucleus. It localises to the gem. Its subcellular location is the cajal body. It is found in the cytoplasm. The protein resides in the cytoplasmic granule. The protein localises to the perikaryon. It localises to the cell projection. Its subcellular location is the neuron projection. It is found in the axon. The protein resides in the myofibril. The protein localises to the sarcomere. It localises to the z line. The SMN complex catalyzes the assembly of small nuclear ribonucleoproteins (snRNPs), the building blocks of the spliceosome, and thereby plays an important role in the splicing of cellular pre-mRNAs. Most spliceosomal snRNPs contain a common set of Sm proteins SNRPB, SNRPD1, SNRPD2, SNRPD3, SNRPE, SNRPF and SNRPG that assemble in a heptameric protein ring on the Sm site of the small nuclear RNA to form the core snRNP (Sm core). In the cytosol, the Sm proteins SNRPD1, SNRPD2, SNRPE, SNRPF and SNRPG are trapped in an inactive 6S pICln-Sm complex by the chaperone CLNS1A that controls the assembly of the core snRNP. To assemble core snRNPs, the SMN complex accepts the trapped 5Sm proteins from CLNS1A forming an intermediate. Binding of snRNA inside 5Sm ultimately triggers eviction of the SMN complex, thereby allowing binding of SNRPD3 and SNRPB to complete assembly of the core snRNP. Within the SMN complex, SMN1 acts as a structural backbone and together with GEMIN2 it gathers the Sm complex subunits. Ensures the correct splicing of U12 intron-containing genes that may be important for normal motor and proprioceptive neurons development. Also required for resolving RNA-DNA hybrids created by RNA polymerase II, that form R-loop in transcription terminal regions, an important step in proper transcription termination. May also play a role in the metabolism of small nucleolar ribonucleoprotein (snoRNPs). The polypeptide is Survival motor neuron protein (SMN1) (Canis lupus familiaris (Dog)).